The following is a 239-amino-acid chain: Pyridoxine 5'-phosphate synthase (239 aa).

A 3-amino-2-oxopropyl phosphate-binding site is contributed by Asn7. 9-10 (DH) is a 1-deoxy-D-xylulose 5-phosphate binding site. Arg18 contacts 3-amino-2-oxopropyl phosphate. His43 functions as the Proton acceptor in the catalytic mechanism. Arg45 and His50 together coordinate 1-deoxy-D-xylulose 5-phosphate. Residue Glu70 is the Proton acceptor of the active site. Thr100 is a 1-deoxy-D-xylulose 5-phosphate binding site. Catalysis depends on His191, which acts as the Proton donor. Residues Gly192 and 213-214 (GH) each bind 3-amino-2-oxopropyl phosphate.

The protein belongs to the PNP synthase family. Homooctamer; tetramer of dimers.

The protein localises to the cytoplasm. It carries out the reaction 3-amino-2-oxopropyl phosphate + 1-deoxy-D-xylulose 5-phosphate = pyridoxine 5'-phosphate + phosphate + 2 H2O + H(+). Its pathway is cofactor biosynthesis; pyridoxine 5'-phosphate biosynthesis; pyridoxine 5'-phosphate from D-erythrose 4-phosphate: step 5/5. Its function is as follows. Catalyzes the complicated ring closure reaction between the two acyclic compounds 1-deoxy-D-xylulose-5-phosphate (DXP) and 3-amino-2-oxopropyl phosphate (1-amino-acetone-3-phosphate or AAP) to form pyridoxine 5'-phosphate (PNP) and inorganic phosphate. The protein is Pyridoxine 5'-phosphate synthase of Pelobacter propionicus (strain DSM 2379 / NBRC 103807 / OttBd1).